Consider the following 752-residue polypeptide: uncharacterized protein (752 aa).

A phosphoserine mark is found at serine 202 and serine 582. Positions 596-752 (EEEKESVEVE…KTGEDGEIVL (157 aa)) are disordered. Composition is skewed to basic and acidic residues over residues 601–613 (SVEVEEGKHKNDL) and 641–677 (LKSEDDNTSEASKDPSSHVKSPENIEKLKQNDDHFEV). Residues 695 to 718 (NNVAETILEVTSSPKSSENSQKQS) are compositionally biased toward polar residues. Phosphoserine occurs at positions 707 and 738.

This is an uncharacterized protein from Schizosaccharomyces pombe (strain 972 / ATCC 24843) (Fission yeast).